The following is a 444-amino-acid chain: MSQSYINVIGAGLAGSEAAYQIAKRGIPVKLYEMRGVKATPQHKTSNFAELVCSNSFRGDSLTNAVGLLKEEMRRLDSIIMRAGEAHRVPAGGAMAVDRVGYAEAVTAELENNPLIEVIRGEITEIPNDAITVIATGPLTSDALAEKIHALNGGEGFYFYDAAAPIIDKSTINMDKVYLKSRYDKGEAAYLNCPMTKEEFLAFHEALTTAEEAPLNSFEKEKYFEGCMPIEVMAKRGIKTMLYGPMKPVGLEYPDDYKGPRDGDYKTPYAVVQLRQDNAAGSLYNMVGFQTHLKWGEQKRVFQMIPGLENAEFVRYGVMHRNSYMDSPNLLKQTFQSRANENLFFAGQMTGVEGYVESAASGLVAGINAARLFKGEEAIIFPETTAIGSLPHYVTHTDSKHFQPMNVNFGIIKELEGKRIRDKKERYEAIAERSLKDLEAFLNS.

10 to 15 (GAGLAG) is a binding site for FAD.

It belongs to the MnmG family. TrmFO subfamily. Requires FAD as cofactor.

It is found in the cytoplasm. It catalyses the reaction uridine(54) in tRNA + (6R)-5,10-methylene-5,6,7,8-tetrahydrofolate + NADH + H(+) = 5-methyluridine(54) in tRNA + (6S)-5,6,7,8-tetrahydrofolate + NAD(+). The catalysed reaction is uridine(54) in tRNA + (6R)-5,10-methylene-5,6,7,8-tetrahydrofolate + NADPH + H(+) = 5-methyluridine(54) in tRNA + (6S)-5,6,7,8-tetrahydrofolate + NADP(+). Catalyzes the folate-dependent formation of 5-methyl-uridine at position 54 (M-5-U54) in all tRNAs. This is Methylenetetrahydrofolate--tRNA-(uracil-5-)-methyltransferase TrmFO from Streptococcus uberis (strain ATCC BAA-854 / 0140J).